Consider the following 125-residue polypeptide: Large ribosomal subunit protein bL12 (125 aa).

It belongs to the bacterial ribosomal protein bL12 family. As to quaternary structure, homodimer. Part of the ribosomal stalk of the 50S ribosomal subunit. Forms a multimeric L10(L12)X complex, where L10 forms an elongated spine to which 2 to 4 L12 dimers bind in a sequential fashion. Binds GTP-bound translation factors.

In terms of biological role, forms part of the ribosomal stalk which helps the ribosome interact with GTP-bound translation factors. Is thus essential for accurate translation. This chain is Large ribosomal subunit protein bL12, found in Methylibium petroleiphilum (strain ATCC BAA-1232 / LMG 22953 / PM1).